Consider the following 439-residue polypeptide: Tubulin beta chain (439 aa).

8 residues coordinate GTP: Gln11, Glu69, Ser138, Gly142, Thr143, Gly144, Asn204, and Asn226. Mg(2+) is bound at residue Glu69.

Belongs to the tubulin family. As to quaternary structure, dimer of alpha and beta chains. A typical microtubule is a hollow water-filled tube with an outer diameter of 25 nm and an inner diameter of 15 nM. Alpha-beta heterodimers associate head-to-tail to form protofilaments running lengthwise along the microtubule wall with the beta-tubulin subunit facing the microtubule plus end conferring a structural polarity. Microtubules usually have 13 protofilaments but different protofilament numbers can be found in some organisms and specialized cells. Requires Mg(2+) as cofactor.

It is found in the cytoplasm. Its subcellular location is the cytoskeleton. Functionally, tubulin is the major constituent of microtubules, a cylinder consisting of laterally associated linear protofilaments composed of alpha- and beta-tubulin heterodimers. Microtubules grow by the addition of GTP-tubulin dimers to the microtubule end, where a stabilizing cap forms. Below the cap, tubulin dimers are in GDP-bound state, owing to GTPase activity of alpha-tubulin. The protein is Tubulin beta chain (TUB2) of Encephalitozoon intestinalis (Microsporidian parasite).